The sequence spans 126 residues: Large ribosomal subunit protein bL19 (126 aa).

It belongs to the bacterial ribosomal protein bL19 family.

Its function is as follows. This protein is located at the 30S-50S ribosomal subunit interface and may play a role in the structure and function of the aminoacyl-tRNA binding site. This chain is Large ribosomal subunit protein bL19, found in Nitrobacter winogradskyi (strain ATCC 25391 / DSM 10237 / CIP 104748 / NCIMB 11846 / Nb-255).